An 892-amino-acid polypeptide reads, in one-letter code: Formin-like protein 8 (892 aa).

A signal peptide spans 1-23 (MPPAIARFVAIAAVLLCGHVAVA). Positions 43–119 (FPIEWTPPPS…SGSGSGHHGG (77 aa)) are disordered. Residues 47–59 (WTPPPSPPPPPAP) show a composition bias toward pro residues. Over residues 87–111 (TTPTSPGTTPSPTTVAADVSKTPSG) the composition is skewed to low complexity. A helical membrane pass occupies residues 126 to 146 (IVAAGAGAAAAVALLGFACAF). The disordered stretch occupies residues 188–457 (PTTPARHHGP…GSGEPRPKLK (270 aa)). A compositionally biased stretch (basic and acidic residues) spans 210–230 (LRSERARRGVSRDEDADHPSP). 3 stretches are compositionally biased toward low complexity: residues 268-286 (AEAW…TTAS), 297-306 (FFPPVAAIAA), and 321-330 (RTRFSTGSTP). Over residues 339 to 383 (SPRPVQPSNAPPPPPPPPPPPPPPPPPKLNTAPKPPPPPPPPPSV) the composition is skewed to pro residues. A compositionally biased stretch (polar residues) spans 424–436 (AATTVDNNGSTSM). An FH2 domain is found at 446-867 (DGGSGEPRPK…GSARSFRISA (422 aa)).

Belongs to the formin-like family. Class-I subfamily.

The protein resides in the membrane. The polypeptide is Formin-like protein 8 (FH8) (Oryza sativa subsp. japonica (Rice)).